Consider the following 1935-residue polypeptide: Myosin-7 (1935 aa).

Residues 32-81 (DLKKDVFVPDDKQEFVKAKIVSREGGKVTAETEYGKTVTVKEDQVMQQNP) enclose the Myosin N-terminal SH3-like domain. The Myosin motor domain occupies 85–778 (DKIEDMAMLT…LLGLLEEMRD (694 aa)). K129 is modified (N6,N6,N6-trimethyllysine). 178-185 (GESGAGKT) contributes to the ATP binding site. Residue T378 is modified to Phosphothreonine. Actin-binding regions lie at residues 655 to 677 (LNKL…IPNE) and 757 to 771 (KFGH…GLLG). Residues 781–810 (LSRIITRIQAQSRGVLARMEYKKLLERRDS) enclose the IQ domain. Positions 839-1935 (LLKSAEREKE…DIGTKGLNEE (1097 aa)) form a coiled coil. S1137 and S1269 each carry phosphoserine. T1282 is subject to Phosphothreonine. Position 1308 is a phosphotyrosine (Y1308). A Phosphothreonine modification is found at T1309. Phosphoserine is present on S1510. Residue T1513 is modified to Phosphothreonine. Positions 1907–1935 (EERADIAESQVNKLRAKSRDIGTKGLNEE) are disordered. Positions 1923 to 1935 (KSRDIGTKGLNEE) are enriched in basic and acidic residues.

Belongs to the TRAFAC class myosin-kinesin ATPase superfamily. Myosin family. Muscle myosin is a hexameric protein that consists of 2 heavy chain subunits (MHC), 2 alkali light chain subunits (MLC) and 2 regulatory light chain subunits (MLC-2). Interacts with ECPAS. Interacts (via C-terminus) with LRRC39. Both wild type and variant Gln-403 are detected in skeletal muscle (at protein level).

The protein localises to the cytoplasm. It is found in the myofibril. Its subcellular location is the sarcomere. In terms of biological role, myosins are actin-based motor molecules with ATPase activity essential for muscle contraction. Forms regular bipolar thick filaments that, together with actin thin filaments, constitute the fundamental contractile unit of skeletal and cardiac muscle. The protein is Myosin-7 (MYH7) of Homo sapiens (Human).